The sequence spans 1938 residues: MNIDFSDPDFQYLAVDRKKLMKEQTAAFDGKKNCWVPDEKEGFASAEIQSSKGDEITVKIVADSSTRTVKKDDIQSMNPPKFEKLEDMANMTYLNEASVLYNLRSRYTSGLIYTYSGLFCIAVNPYRRLPIYTDSVIAKYRGKRKTEIPPHLFSVADNAYQNMVTDRENQSCLITGESGAGKTENTKKVIMYLAKVACAVKKKDEEASDKKEGSLEDQIIQANPVLEAYGNAKTTRNNNSSRFGKFIRIHFGPTGKIAGADIETYLLEKSRVTYQQSAERNYHIFYQICSNAIPELNDVMLVTPDSGLYSFINQGCLTVDNIDDVEEFKLCDEAFDILGFTKEEKQSMFKCTASILHMGEMKFKQRPREEQAESDGTAEAEKVAFLCGINAGDLLKALLKPKVKVGTEMVTKGQNMNQVVNSVGALAKSLYDRMFNWLVRRVNKTLDTKAKRNYYIGVLDIAGFEIFDFNSFEQLCINYTNERLQQFFNHHMFILEQEEYKKEGIAWEFIDFGMDLQMCIDLIEKPMGILSILEEECMFPKADDKSFQDKLYQNHMGKNRMFTKPGKPTRPNQGPAHFELHHYAGNVPYSITGWLEKNKDPINENVVALLGASKEPLVAELFKAPEEPAGGGKKKKGKSSAFQTISAVHRESLNKLMKNLYSTHPHFVRCIIPNELKQPGLVDAELVLHQLQCNGVLEGIRICRKGFPSRLIYSEFKQRYSILAPNAIPQGFVDGKTVSEKILAGLQMDPAEYRLGTTKVFFKAGVLGNLEEMRDERLSKIISMFQAHIRGYLIRKAYKKLQDQRIGLSVIQRNIRKWLVLRNWQWWKLYSKVKPLLSIARQEEEMKEQLKQMDKMKEDLAKTERIKKELEEQNVTLLEQKNDLFLQLQTLEDSMGDQEERVEKLIMQKADFESQIKELEERLLDEEDAAADLEGIKKKMEADNANLKKDIGDLENTLQKAEQDKAHKDNQISTLQGEISQQDEHIGKLNKEKKALEEANKKTSDSLQAEEDKCNHLNKLKAKLEQALDELEDNLEREKKVRGDVEKAKRKVEQDLKSTQENVEDLERVKRELEENVRRKEAEISSLNSKLEDEQNLVSQLQRKIKELQARIEELEEELEAERNARAKVEKQRAELNRELEELGERLDEAGGATSAQIELNKKREAELLKIRRDLEEASLQHEAQISALRKKHQDAANEMADQVDQLQKVKSKLEKDKKDLKREMDDLESQMTHNMKNKGCSEKVMKQFESQMSDLNARLEDSQRSINELQSQKSRLQAENSDLTRQLEDAEHRVSVLSKEKSQLSSQLEDARRSLEEETRARSKLQNEVRNMHADMDAIREQLEEEQESKSDVQRQLSKANNEIQQWRSKFESEGANRTEELEDQKRKLLGKLSEAEQTTEAANAKCSALEKAKSRLQQELEDMSIEVDRANASVNQMEKKQRAFDKTTAEWQAKVNSLQSELENSQKESRGYSAELYRIKASIEEYQDSIGALRRENKNLADEIHDLTDQLSEGGRSTHELDKARRRLEMEKEELQAALEEAEGALEQEEAKVMRAQLEIATVRNEIDKRIQEKEEEFDNTRRNHQRALESMQASLEAEAKGKADAMRIKKKLEQDINELEVALDASNRGKAEMEKTVKRYQQQIREMQTSIEEEQRQRDEARESYNMAERRCTLMSGEVEELRAALEQAERARKASDNELADANDRVNELTSQVSSVQGQKRKLEGDINAMQTDLDEMHGELKGADERCKKAMADAARLADELRAEQDHSNQVEKVRKNLESQVKEFQIRLDEAEASSLKGGKKMIQKLESRVHELEAELDNEQRRHAETQKNMRKADRRLKELAFQADEDRKNQERLQELIDKLNAKIKTFKRQVEEAEEIAAINLAKYRKAQHELEEAEERADTADSTLQKFRAKSRSSVSVQRSSVSVSASN.

One can recognise a Myosin N-terminal SH3-like domain in the interval 29-79; it reads DGKKNCWVPDEKEGFASAEIQSSKGDEITVKIVADSSTRTVKKDDIQSMNP. Residues 83–775 enclose the Myosin motor domain; the sequence is EKLEDMANMT…VLGNLEEMRD (693 aa). An ATP-binding site is contributed by 176–183; the sequence is GESGAGKT. The segment at 653-675 is actin-binding; sequence LNKLMKNLYSTHPHFVRCIIPNE. The region spanning 778 to 805 is the IQ domain; sequence LSKIISMFQAHIRGYLIRKAYKKLQDQR. Residues 836 to 1938 are rodlike tail (S2 and LMM domains); the sequence is LLSIARQEEE…RSSVSVSASN (1103 aa). Residues 836–1938 are a coiled coil; the sequence is LLSIARQEEE…RSSVSVSASN (1103 aa). Basic and acidic residues-rich tracts occupy residues 1041–1058 and 1212–1225; these read VRGDVEKAKRKVEQDLKS and SKLEKDKKDLKREM. Disordered stretches follow at residues 1041 to 1062, 1187 to 1332, 1344 to 1363, and 1898 to 1938; these read VRGDVEKAKRKVEQDLKSTQEN, SALR…EVRN, LEEEQESKSDVQRQLSKANN, and HELE…SASN. The span at 1265–1285 shows a compositional bias: polar residues; it reads RSINELQSQKSRLQAENSDLT. Composition is skewed to basic and acidic residues over residues 1286–1303, 1310–1332, and 1344–1354; these read RQLEDAEHRVSVLSKEKS, EDARRSLEEETRARSKLQNEVRN, and LEEEQESKSDV. Low complexity predominate over residues 1922–1938; that stretch reads RSSVSVQRSSVSVSASN.

It belongs to the TRAFAC class myosin-kinesin ATPase superfamily. Myosin family. As to quaternary structure, muscle myosin is a hexameric protein that consists of 2 heavy chain subunits (MHC), 2 alkali light chain subunits (MLC) and 2 regulatory light chain subunits (MLC-2).

The protein localises to the cytoplasm. It localises to the myofibril. Functionally, muscle contraction. Its function is as follows. Myosin is a protein that binds to F-actin and has ATPase activity that is activated by F-actin. This Argopecten irradians (Bay scallop) protein is Myosin heavy chain, striated muscle.